Here is a 96-residue protein sequence, read N- to C-terminus: UPF0235 protein YggU (96 aa).

This sequence belongs to the UPF0235 family.

The protein is UPF0235 protein YggU of Salmonella typhi.